The sequence spans 96 residues: Co-chaperonin GroES (96 aa).

This sequence belongs to the GroES chaperonin family. In terms of assembly, heptamer of 7 subunits arranged in a ring. Interacts with the chaperonin GroEL.

It is found in the cytoplasm. In terms of biological role, together with the chaperonin GroEL, plays an essential role in assisting protein folding. The GroEL-GroES system forms a nano-cage that allows encapsulation of the non-native substrate proteins and provides a physical environment optimized to promote and accelerate protein folding. GroES binds to the apical surface of the GroEL ring, thereby capping the opening of the GroEL channel. The protein is Co-chaperonin GroES of Shewanella pealeana (strain ATCC 700345 / ANG-SQ1).